The primary structure comprises 173 residues: Glutamyl-tRNA(Gln) amidotransferase subunit F, mitochondrial (173 aa).

The N-terminal 15 residues, 1–15, are a transit peptide targeting the mitochondrion; the sequence is MSRFMIRAVFFRRYT.

This sequence belongs to the GatF family. Subunit of the heterotrimeric GatFAB amidotransferase (AdT) complex, composed of A, B and F subunits.

It localises to the mitochondrion inner membrane. It carries out the reaction L-glutamyl-tRNA(Gln) + L-glutamine + ATP + H2O = L-glutaminyl-tRNA(Gln) + L-glutamate + ADP + phosphate + H(+). Functionally, allows the formation of correctly charged Gln-tRNA(Gln) through the transamidation of misacylated Glu-tRNA(Gln) in the mitochondria. The reaction takes place in the presence of glutamine and ATP through an activated gamma-phospho-Glu-tRNA(Gln). Required for proper protein synthesis within the mitochondrion. The sequence is that of Glutamyl-tRNA(Gln) amidotransferase subunit F, mitochondrial from Candida glabrata (strain ATCC 2001 / BCRC 20586 / JCM 3761 / NBRC 0622 / NRRL Y-65 / CBS 138) (Yeast).